The primary structure comprises 162 residues: Novel acetylcholine receptor chaperone (162 aa).

Over 1-5 (MASPR) the chain is Cytoplasmic. The chain crosses the membrane as a helical span at residues 6–26 (TVTIVALSVTLGLFFVFMGTI). Residues 27–61 (KLTPRLSKDAYSEMKRAYKSYVKALPALKKIGISS) lie on the Lumenal side of the membrane. A helical membrane pass occupies residues 62 to 82 (VFLRKAIGSLELACGIVLTLV). Over 83 to 88 (PGRPKD) the chain is Cytoplasmic. Residues 89–109 (VANFILLLLVLIVLFFHQLVG) traverse the membrane as a helical segment. Over 110–114 (DPLKR) the chain is Lumenal. A helical transmembrane segment spans residues 115-131 (YAHALVFGILLTCRLLV). The Cytoplasmic portion of the chain corresponds to 132–162 (SRQPEEEFPEKKLSRGNNGAHSREPIKMKVS). The disordered stretch occupies residues 141-162 (EKKLSRGNNGAHSREPIKMKVS). Residues 152–162 (HSREPIKMKVS) show a composition bias toward basic and acidic residues.

Belongs to the DoxX family.

The protein localises to the peroxisome membrane. Its subcellular location is the cytoplasmic vesicle. The protein resides in the endoplasmic reticulum membrane. Its function is as follows. Molecular chaperone which mediates the proper assembly and functional expression of the nicotinic acetylcholine receptors (nAChRs) throughout the brain. Essential for the proper folding, assembly, function and surface trafficking of alpha-7 (CHRNA7), alpha-4-beta-2, alpha-3-beta-2 and alpha-3-beta-4 receptors. The chain is Novel acetylcholine receptor chaperone (tmem35a) from Xenopus tropicalis (Western clawed frog).